The primary structure comprises 697 residues: Histone-lysine N-methyltransferase SETDB2 (697 aa).

Positions 172-242 (LKKENPLNLP…DNFSFSTQVQ (71 aa)) constitute an MBD domain. Residues 304 to 378 (KCCSCTDGCL…LCQNRVVQHG (75 aa)) enclose the Pre-SET domain. Positions 306, 308, 312, 318, 320, 359, 363, 365, and 370 each coordinate Zn(2+). In terms of domain architecture, SET spans 381 to 672 (LRLQVFKTDT…AGTELTWDYN (292 aa)). S-adenosyl-L-methionine is bound at residue 391–393 (KGW). Disordered regions lie at residues 438 to 461 (KEDN…HSDS) and 529 to 605 (VHNS…STSP). The span at 565 to 581 (SGYVSEESSSSVISGGH) shows a compositional bias: low complexity. Residues Arg626 and 629 to 630 (NH) contribute to the S-adenosyl-L-methionine site. Residues Cys632, Cys685, Cys687, and Cys692 each contribute to the Zn(2+) site.

The protein belongs to the class V-like SAM-binding methyltransferase superfamily.

The protein resides in the nucleus. Its subcellular location is the chromosome. It catalyses the reaction N(6),N(6)-dimethyl-L-lysyl(9)-[histone H3] + S-adenosyl-L-methionine = N(6),N(6),N(6)-trimethyl-L-lysyl(9)-[histone H3] + S-adenosyl-L-homocysteine + H(+). In terms of biological role, histone methyltransferase involved in left-right axis specification in early development and mitosis. Specifically trimethylates 'Lys-9' of histone H3 (H3K9me3). H3K9me3 represents a specific tag for epigenetic transcriptional repression by recruiting HP1 (CBX1, CBX3 and/or CBX5) proteins to methylated histones. Contributes to H3K9me3 in both the interspersed repetitive elements and centromere-associated repeats. Plays a role in chromosome condensation and segregation during mitosis. In Xenopus tropicalis (Western clawed frog), this protein is Histone-lysine N-methyltransferase SETDB2 (setdb2).